Here is a 304-residue protein sequence, read N- to C-terminus: Ribonuclease Z (304 aa).

H61, H63, D65, H66, H138, D206, and H265 together coordinate Zn(2+). Catalysis depends on D65, which acts as the Proton acceptor.

Belongs to the RNase Z family. In terms of assembly, homodimer. Requires Zn(2+) as cofactor.

The catalysed reaction is Endonucleolytic cleavage of RNA, removing extra 3' nucleotides from tRNA precursor, generating 3' termini of tRNAs. A 3'-hydroxy group is left at the tRNA terminus and a 5'-phosphoryl group is left at the trailer molecule.. In terms of biological role, zinc phosphodiesterase, which displays some tRNA 3'-processing endonuclease activity. Probably involved in tRNA maturation, by removing a 3'-trailer from precursor tRNA. The sequence is that of Ribonuclease Z from Lachnoclostridium phytofermentans (strain ATCC 700394 / DSM 18823 / ISDg) (Clostridium phytofermentans).